A 167-amino-acid polypeptide reads, in one-letter code: NAD(P)H-quinone oxidoreductase subunit I, chloroplastic (167 aa).

4Fe-4S ferredoxin-type domains follow at residues 55-84 (GRIHFEFDKCIACEVCVRVCPINLPVVDWI) and 95-124 (KNYSIDFGVCIFCGNCVEYCPTNCLSMTEE). Positions 64, 67, 70, 74, 104, 107, 110, and 114 each coordinate [4Fe-4S] cluster.

This sequence belongs to the complex I 23 kDa subunit family. NDH is composed of at least 16 different subunits, 5 of which are encoded in the nucleus. The cofactor is [4Fe-4S] cluster.

Its subcellular location is the plastid. The protein resides in the chloroplast thylakoid membrane. It catalyses the reaction a plastoquinone + NADH + (n+1) H(+)(in) = a plastoquinol + NAD(+) + n H(+)(out). It carries out the reaction a plastoquinone + NADPH + (n+1) H(+)(in) = a plastoquinol + NADP(+) + n H(+)(out). In terms of biological role, NDH shuttles electrons from NAD(P)H:plastoquinone, via FMN and iron-sulfur (Fe-S) centers, to quinones in the photosynthetic chain and possibly in a chloroplast respiratory chain. The immediate electron acceptor for the enzyme in this species is believed to be plastoquinone. Couples the redox reaction to proton translocation, and thus conserves the redox energy in a proton gradient. This chain is NAD(P)H-quinone oxidoreductase subunit I, chloroplastic, found in Adiantum capillus-veneris (Maidenhair fern).